Consider the following 464-residue polypeptide: Putative protein TIC 214 C-terminal part (464 aa).

The protein belongs to the TIC214 family. In terms of assembly, part of the Tic complex.

It localises to the plastid. It is found in the chloroplast. In terms of biological role, involved in protein precursor import into chloroplasts. May be part of an intermediate translocation complex acting as a protein-conducting channel at the inner envelope. This Marchantia polymorpha (Common liverwort) protein is Putative protein TIC 214 C-terminal part.